The following is a 2427-amino-acid chain: Interferon-induced very large GTPase 1 (2427 aa).

In terms of domain architecture, VLIG-type G spans 1485–1726 (DKRLFVLSVL…KISDFKFRVQ (242 aa)). Residues 1495 to 1502 (GLQSSGKS), 1548 to 1551 (DTEG), and 1625 to 1628 (TAKD) each bind GTP.

This sequence belongs to the TRAFAC class dynamin-like GTPase superfamily. Very large inducible GTPase (VLIG) family. Widely expressed. Expressed at low basal level in lung, heart, thymus and spleen; at still lower level in liver, ovary, kidney and brain. Expressed at very weak level in testis. Undetectable in embryo.

It localises to the cytoplasm. Its subcellular location is the cytosol. The protein resides in the nucleus. The polypeptide is Interferon-induced very large GTPase 1 (Gvin1) (Mus musculus (Mouse)).